Consider the following 253-residue polypeptide: Probable transcriptional regulatory protein Mmar10_2433 (253 aa).

The protein belongs to the TACO1 family.

It localises to the cytoplasm. The polypeptide is Probable transcriptional regulatory protein Mmar10_2433 (Maricaulis maris (strain MCS10) (Caulobacter maris)).